The following is a 365-amino-acid chain: Protein RecA (365 aa).

73–80 lines the ATP pocket; it reads GPESSGKT.

Belongs to the RecA family.

Its subcellular location is the cytoplasm. In terms of biological role, can catalyze the hydrolysis of ATP in the presence of single-stranded DNA, the ATP-dependent uptake of single-stranded DNA by duplex DNA, and the ATP-dependent hybridization of homologous single-stranded DNAs. It interacts with LexA causing its activation and leading to its autocatalytic cleavage. In Prochlorococcus marinus (strain MIT 9312), this protein is Protein RecA.